The following is a 500-amino-acid chain: Protein psiE (500 aa).

Residues 1 to 18 (MKLISVLITFLLATVIYS) form the signal peptide. A glycan (N-linked (GlcNAc...) asparagine) is linked at N59. In terms of domain architecture, PA14 spans 114–256 (TYDTTRKIYV…KDYCGVCQGD (143 aa)). Residues N314, N341, N366, N420, and N469 are each glycosylated (N-linked (GlcNAc...) asparagine).

It belongs to the prespore-cell-inducing factor family.

The protein localises to the secreted. This chain is Protein psiE (psiE), found in Dictyostelium discoideum (Social amoeba).